We begin with the raw amino-acid sequence, 460 residues long: Inactive ubiquitin carboxyl-terminal hydrolase MINDY-4B (460 aa).

Positions 41 to 76 (TNNSTPQNHEGNHTSADENEDGTGLSQPKGQGHLPS) are disordered.

Belongs to the MINDY deubiquitinase family. FAM188 subfamily.

The sequence is that of Inactive ubiquitin carboxyl-terminal hydrolase MINDY-4B from Homo sapiens (Human).